Consider the following 901-residue polypeptide: Protein translocase subunit SecA (901 aa).

ATP is bound by residues Gln87, 105-109 (GEGKT), and Asp512. The interval 855 to 891 (QQLSHQDDETAAAAALAEQTGERKVGRNDPCPCGSGK) is disordered. Residues Cys885, Cys887, Cys896, and His897 each contribute to the Zn(2+) site.

This sequence belongs to the SecA family. Monomer and homodimer. Part of the essential Sec protein translocation apparatus which comprises SecA, SecYEG and auxiliary proteins SecDF-YajC and YidC. Requires Zn(2+) as cofactor.

The protein resides in the cell inner membrane. It localises to the cytoplasm. It catalyses the reaction ATP + H2O + cellular proteinSide 1 = ADP + phosphate + cellular proteinSide 2.. In terms of biological role, part of the Sec protein translocase complex. Interacts with the SecYEG preprotein conducting channel. Has a central role in coupling the hydrolysis of ATP to the transfer of proteins into and across the cell membrane, serving both as a receptor for the preprotein-SecB complex and as an ATP-driven molecular motor driving the stepwise translocation of polypeptide chains across the membrane. This is Protein translocase subunit SecA from Cronobacter sakazakii (strain ATCC BAA-894) (Enterobacter sakazakii).